Consider the following 194-residue polypeptide: Ferredoxin, apicoplast (194 aa).

Residues 1–19 (MNIVILLLILTFSIKHSNT) constitute an apicoplast transit peptide. The 91-residue stretch at 99 to 189 (YNITLRTNDG…DCVIETHKED (91 aa)) folds into the 2Fe-2S ferredoxin-type domain. 4 residues coordinate [2Fe-2S] cluster: Cys-135, Cys-140, Cys-143, and Cys-173.

This sequence belongs to the 2Fe2S plant-type ferredoxin family. It depends on [2Fe-2S] cluster as a cofactor.

It is found in the plastid. The protein localises to the apicoplast. In terms of biological role, ferredoxins are iron-sulfur proteins that transfer electrons in a wide variety of metabolic reactions. By transferring electrons to 4-hydroxy-3-methylbut-2-enyl diphosphate reductase LytB/IspH, plays a role in the terminal step of the DOXP/MEP pathway for isoprenoid precursor biosynthesis. This chain is Ferredoxin, apicoplast, found in Plasmodium falciparum (isolate 3D7).